Reading from the N-terminus, the 323-residue chain is Aquaporin-4 (323 aa).

Residues 1–36 (MSDRPTARRWGKCGPLCTRENIMVAFKGVWTQAFWK) are Cytoplasmic-facing. Residues cysteine 13 and cysteine 17 are each lipidated (S-palmitoyl cysteine). A helical transmembrane segment spans residues 37–57 (AVTAEFLAMLIFVLLSLGSTI). Residues 58–69 (NWGGTEKPLPVD) are Extracellular-facing. The helical transmembrane segment at 70-89 (MVLISLCFGLSIATMVQCFG) threads the bilayer. The Cytoplasmic portion of the chain corresponds to 90–93 (HISG). An intramembrane region (discontinuously helical) is located at residues 94-101 (GHINPAVT). The NPA 1 motif lies at 97–99 (NPA). Residues 102–115 (VAMVCTRKISIAKS) lie on the Cytoplasmic side of the membrane. Serine 111 is modified (phosphoserine; by PKG). Residues 116–136 (VFYIAAQCLGAIIGAGILYLV) form a helical membrane-spanning segment. Over 137 to 155 (TPPSVVGGLGVTMVHGNLT) the chain is Extracellular. Asparagine 153 is a glycosylation site (N-linked (GlcNAc...) asparagine). The chain crosses the membrane as a helical span at residues 156–176 (AGHGLLVELIITFQLVFTIFA). At 177-184 (SCDSKRTD) the chain is on the cytoplasmic side. Serine 180 is modified (phosphoserine; by PKC). A helical membrane pass occupies residues 185-205 (VTGSIALAIGFSVAIGHLFAI). An N-linked (GlcNAc...) asparagine glycan is attached at asparagine 206. The Extracellular segment spans residues 206–208 (NYT). Residues 209–222 (GASMNPARSFGPAV) constitute an intramembrane region (discontinuously helical). The NPA 2 signature appears at 213–215 (NPA). The Extracellular portion of the chain corresponds to 223–231 (IMGNWENHW). Residues 232–252 (IYWVGPIIGAVLAGGLYEYVF) form a helical membrane-spanning segment. Topologically, residues 253–323 (CPDVEFKRRF…DQSGEVLSSV (71 aa)) are cytoplasmic. Residues serine 276 and serine 285 each carry the phosphoserine modification. Position 289 is a phosphothreonine (threonine 289). Serine 321 bears the Phosphoserine mark.

This sequence belongs to the MIP/aquaporin (TC 1.A.8) family. In terms of assembly, homotetramer. The tetramers can form oligomeric arrays in membranes. The size of the oligomers differs between tissues and is smaller in skeletal muscle than in brain. Interaction between AQP4 oligomeric arrays in close-by cells can contribute to cell-cell adhesion. Part of a complex containing MLC1, TRPV4, HEPACAM and ATP1B1. In terms of processing, phosphorylation by PKC at Ser-180 reduces conductance by 50%. Phosphorylation by PKG at Ser-111 in response to glutamate increases conductance by 40%. Isoform 2: Palmitoylated on its N-terminal region. Isoform 1: Not palmitoylated. As to expression, detected in skeletal muscle. Detected in stomach, along the glandular base region of the fundic gland (at protein level). Detected in brain, lung and skeletal muscle, and at much lower levels in heart and ovary.

Its subcellular location is the cell membrane. The protein localises to the basolateral cell membrane. It is found in the endosome membrane. It localises to the sarcolemma. The protein resides in the cell projection. It catalyses the reaction H2O(in) = H2O(out). Forms a water-specific channel. Plays an important role in brain water homeostasis. It is involved in glymphatic solute transport and is required for a normal rate of water exchange across the blood brain interface. Required for normal levels of cerebrospinal fluid influx into the brain cortex and parenchyma along paravascular spaces that surround penetrating arteries, and for normal drainage of interstitial fluid along paravenous drainage pathways. Thereby, it is required for normal clearance of solutes from the brain interstitial fluid, including soluble beta-amyloid peptides derived from APP. Plays a redundant role in urinary water homeostasis and urinary concentrating ability. The polypeptide is Aquaporin-4 (AQP4) (Homo sapiens (Human)).